Consider the following 457-residue polypeptide: Bifunctional protein GlmU (457 aa).

The interval 1 to 228 is pyrophosphorylase; that stretch reads MEELVSVILA…SEEIIGVNSR (228 aa). Residues 9 to 12, Lys23, Gln73, and 78 to 79 each bind UDP-N-acetyl-alpha-D-glucosamine; these read LAAG and GT. Position 102 (Asp102) interacts with Mg(2+). 4 residues coordinate UDP-N-acetyl-alpha-D-glucosamine: Gly139, Glu154, Asn169, and Asn226. A Mg(2+)-binding site is contributed by Asn226. The linker stretch occupies residues 229-249; sequence VQLSNAEKVMRRRINEKHMEN. The N-acetyltransferase stretch occupies residues 250-457; it reads GVTIIDPDST…VEERIKKGRL (208 aa). The UDP-N-acetyl-alpha-D-glucosamine site is built by Arg331 and Lys349. His361 serves as the catalytic Proton acceptor. UDP-N-acetyl-alpha-D-glucosamine contacts are provided by Tyr364 and Asn375. Acetyl-CoA is bound by residues 384–385, Ala421, and Arg438; that span reads NY.

In the N-terminal section; belongs to the N-acetylglucosamine-1-phosphate uridyltransferase family. It in the C-terminal section; belongs to the transferase hexapeptide repeat family. Homotrimer. Mg(2+) is required as a cofactor.

The protein resides in the cytoplasm. It catalyses the reaction alpha-D-glucosamine 1-phosphate + acetyl-CoA = N-acetyl-alpha-D-glucosamine 1-phosphate + CoA + H(+). The enzyme catalyses N-acetyl-alpha-D-glucosamine 1-phosphate + UTP + H(+) = UDP-N-acetyl-alpha-D-glucosamine + diphosphate. Its pathway is nucleotide-sugar biosynthesis; UDP-N-acetyl-alpha-D-glucosamine biosynthesis; N-acetyl-alpha-D-glucosamine 1-phosphate from alpha-D-glucosamine 6-phosphate (route II): step 2/2. It functions in the pathway nucleotide-sugar biosynthesis; UDP-N-acetyl-alpha-D-glucosamine biosynthesis; UDP-N-acetyl-alpha-D-glucosamine from N-acetyl-alpha-D-glucosamine 1-phosphate: step 1/1. The protein operates within bacterial outer membrane biogenesis; LPS lipid A biosynthesis. Catalyzes the last two sequential reactions in the de novo biosynthetic pathway for UDP-N-acetylglucosamine (UDP-GlcNAc). The C-terminal domain catalyzes the transfer of acetyl group from acetyl coenzyme A to glucosamine-1-phosphate (GlcN-1-P) to produce N-acetylglucosamine-1-phosphate (GlcNAc-1-P), which is converted into UDP-GlcNAc by the transfer of uridine 5-monophosphate (from uridine 5-triphosphate), a reaction catalyzed by the N-terminal domain. In Caldanaerobacter subterraneus subsp. tengcongensis (strain DSM 15242 / JCM 11007 / NBRC 100824 / MB4) (Thermoanaerobacter tengcongensis), this protein is Bifunctional protein GlmU.